The primary structure comprises 273 residues: Type III pantothenate kinase (273 aa).

Residue 5 to 12 (DVGNSHVV) participates in ATP binding. 112–115 (GTDL) serves as a coordination point for substrate. Asp114 (proton acceptor) is an active-site residue. Asp134 serves as a coordination point for K(+). Thr137 is an ATP binding site. Thr189 lines the substrate pocket.

It belongs to the type III pantothenate kinase family. Homodimer. NH4(+) is required as a cofactor. The cofactor is K(+).

The protein resides in the cytoplasm. The catalysed reaction is (R)-pantothenate + ATP = (R)-4'-phosphopantothenate + ADP + H(+). It participates in cofactor biosynthesis; coenzyme A biosynthesis; CoA from (R)-pantothenate: step 1/5. Its function is as follows. Catalyzes the phosphorylation of pantothenate (Pan), the first step in CoA biosynthesis. The sequence is that of Type III pantothenate kinase from Treponema pallidum subsp. pallidum (strain SS14).